The primary structure comprises 494 residues: Sugar phosphate exchanger 3 (494 aa).

A helical membrane pass occupies residues 16 to 36 (FSHHHVVVFLLTFFSYSLLHA). N-linked (GlcNAc...) asparagine glycosylation is present at Asn58. Helical transmembrane passes span 81-101 (TLFL…GLFI), 113-133 (WVLS…GALT), 147-167 (LWIV…AVMG), 177-197 (VVFG…ACLA), and 209-229 (FLVT…GLLV). An N-linked (GlcNAc...) asparagine glycan is attached at Asn266. A run of 6 helical transmembrane segments spans residues 297–317 (LAYA…PFYL), 333–353 (IWYD…SDVL), 357–377 (APVL…YSRS), 386–406 (LLMT…SSAI), 428–448 (GIVD…VSLI), and 452–472 (LGWM…IVFI).

Belongs to the major facilitator superfamily. Organophosphate:Pi antiporter (OPA) (TC 2.A.1.4) family. In terms of assembly, interacts with ATRAID; the interaction is direct and both proteins are mutually dependent for their stability. Glycosylated. In terms of tissue distribution, expressed in liver, kidney, intestine and pancreas.

The protein resides in the endoplasmic reticulum membrane. It localises to the lysosome membrane. Unlike the other SLC37 members, lacks glucose-6-phosphate antiporter activity. In osteoclasts, forms a transporter complex with ATRAID for nitrogen-containing-bisphophonates (N-BPs) required for releasing N-BP molecules that have trafficked to lysosomes through fluid-phase endocytosis into the cytosol. This Homo sapiens (Human) protein is Sugar phosphate exchanger 3.